A 349-amino-acid polypeptide reads, in one-letter code: MNTTSPAAPSSSGVSFISLLVIIVLSVALAVGLPGNSFVVWSILAKLRKRSVTALMVLHLALADLAVLLTAPFFLYSVAQGTWTFGLSSCRLFHYVCGVSMYASVLLIMTMSLDRSLAVALPFVSQKLRTKAVAWRVLAGIWVMSVLLATPVLLYRTVHLGLNNRSLTCFLKYPSERHRAFHLFFEVITGFLLPFLVVVASYCDIGRRLRARRFRRSRRTGRLVALIILAFAAFWLPYHVVNLAEGFRAAAGKALGSGPVGRRLLLARHVLITLAFLSSSVNPLLYACAGGGLLRSAGVGFIAKLLEGTGSETSSSRRKGTLAQTLRGTPASPEPDPAESLTASTNPLE.

Residues 1–19 are Extracellular-facing; it reads MNTTSPAAPSSSGVSFISL. N-linked (GlcNAc...) asparagine glycosylation is present at Asn2. A helical membrane pass occupies residues 20-42; that stretch reads LVIIVLSVALAVGLPGNSFVVWS. Residues 43–54 lie on the Cytoplasmic side of the membrane; it reads ILAKLRKRSVTA. The helical transmembrane segment at 55 to 75 threads the bilayer; the sequence is LMVLHLALADLAVLLTAPFFL. Residues 76 to 91 are Extracellular-facing; it reads YSVAQGTWTFGLSSCR. The helical transmembrane segment at 92–113 threads the bilayer; sequence LFHYVCGVSMYASVLLIMTMSL. Over 114–138 the chain is Cytoplasmic; it reads DRSLAVALPFVSQKLRTKAVAWRVL. Residues 139 to 159 traverse the membrane as a helical segment; sequence AGIWVMSVLLATPVLLYRTVH. Residues 160–179 lie on the Extracellular side of the membrane; it reads LGLNNRSLTCFLKYPSERHR. Asn164 carries an N-linked (GlcNAc...) asparagine glycan. Residues 180–200 traverse the membrane as a helical segment; it reads AFHLFFEVITGFLLPFLVVVA. At 201–222 the chain is on the cytoplasmic side; that stretch reads SYCDIGRRLRARRFRRSRRTGR. Residues 223–243 traverse the membrane as a helical segment; the sequence is LVALIILAFAAFWLPYHVVNL. Topologically, residues 244–269 are extracellular; sequence AEGFRAAAGKALGSGPVGRRLLLARH. A helical transmembrane segment spans residues 270-290; the sequence is VLITLAFLSSSVNPLLYACAG. Topologically, residues 291–349 are cytoplasmic; the sequence is GGLLRSAGVGFIAKLLEGTGSETSSSRRKGTLAQTLRGTPASPEPDPAESLTASTNPLE. The disordered stretch occupies residues 311-349; it reads SETSSSRRKGTLAQTLRGTPASPEPDPAESLTASTNPLE.

The protein belongs to the G-protein coupled receptor 1 family. In terms of processing, phosphorylated by GRK6 upon leukotriene B4 binding; which promotes desensitization.

It is found in the cell membrane. In terms of biological role, receptor for extracellular ATP &gt; UTP and ADP. The activity of this receptor is mediated by G proteins which activate a phosphatidylinositol-calcium second messenger system. May be the cardiac P2Y receptor involved in the regulation of cardiac muscle contraction through modulation of L-type calcium currents. Is a receptor for leukotriene B4, a potent chemoattractant involved in inflammation and immune response. The sequence is that of Leukotriene B4 receptor 1 (LTB4R) from Bos taurus (Bovine).